We begin with the raw amino-acid sequence, 256 residues long: Proteasome subunit beta type-5 (256 aa).

Residues 1–55 (CNMALADIVRLPPASEAPFAPLGAPRDLSGPPSKLAVRPWGGADLPGPGLQLLHG) constitute a propeptide, removed in mature form. The active-site Nucleophile is the Thr56.

It belongs to the peptidase T1B family. In terms of assembly, the 26S proteasome consists of a 20S proteasome core and two 19S regulatory subunits. The 20S proteasome core is a barrel-shaped complex made of 28 subunits that are arranged in four stacked rings. The two outer rings are each formed by seven alpha subunits, and the two inner rings are formed by seven beta subunits. The proteolytic activity is exerted by three beta-subunits PSMB5, PSMB6 and PSMB7. Directly interacts with POMP. Interacts with ABCB1 and TAP1.

The protein localises to the cytoplasm. Its subcellular location is the nucleus. It carries out the reaction Cleavage of peptide bonds with very broad specificity.. Component of the 20S core proteasome complex involved in the proteolytic degradation of most intracellular proteins. This complex plays numerous essential roles within the cell by associating with different regulatory particles. Associated with two 19S regulatory particles, forms the 26S proteasome and thus participates in the ATP-dependent degradation of ubiquitinated proteins. The 26S proteasome plays a key role in the maintenance of protein homeostasis by removing misfolded or damaged proteins that could impair cellular functions, and by removing proteins whose functions are no longer required. Associated with the PA200 or PA28, the 20S proteasome mediates ubiquitin-independent protein degradation. This type of proteolysis is required in several pathways including spermatogenesis (20S-PA200 complex) or generation of a subset of MHC class I-presented antigenic peptides (20S-PA28 complex). Within the 20S core complex, PSMB5 displays a chymotrypsin-like activity. The chain is Proteasome subunit beta type-5 (PSMB5) from Gallus gallus (Chicken).